The primary structure comprises 201 residues: MYB-like transcription factor EOBI (201 aa).

2 consecutive HTH myb-type domains span residues Asp-10–Leu-62 and Arg-63–Ile-117. 2 DNA-binding regions (H-T-H motif) span residues Trp-38–Leu-62 and Trp-90–Ile-113. Residues Asp-121–Ile-170 form a disordered region. Polar residues predominate over residues Gln-135–Tyr-159. Over residues Thr-160–Asn-169 the composition is skewed to low complexity.

In terms of tissue distribution, expressed exclusively in flower organs. Accumulates mostly in flower limbs, to a lower extent in pistils and flower tubes, and, at low levels, in stamens.

The protein localises to the nucleus. In terms of biological role, MYB-type transcription factor controlling the production of volatile organic compounds (VOCs), including floral volatile benzenoids and phenylpropanoids (FVBP), in flowers of fragrant cultivars (e.g. cv. Mitchell and cv. V26) by regulating the expression of ODO1, a key regulator of the shikimate pathway, and of several biosynthetic floral scent-related genes (e.g. IGS, EGS, BSMT1, BSMT2, PAL1, PAL2, EPSPS, DAHPS, CS, CM1, ADT1 and PPA-AT). Binds to and activates the promoters of at least ODO1, IGS1 and PAL1. This Petunia hybrida (Petunia) protein is MYB-like transcription factor EOBI.